Here is a 448-residue protein sequence, read N- to C-terminus: Probable protein phosphatase 2C 74 (448 aa).

The segment at 1 to 48 (MGSCLSSSGGGGSRRSLHGSPHVPGPGRRKRPPKRRPGSCSSSFDNTE) is disordered. A lipid anchor (N-myristoyl glycine) is attached at Gly-2. Residues 27 to 37 (GRRKRPPKRRP) show a composition bias toward basic residues. In terms of domain architecture, PPM-type phosphatase spans 67-384 (TVSLFSQQGK…DDCAVVCLFL (318 aa)). Mn(2+) is bound by residues Asp-103, Gly-104, Asp-329, and Asp-375. A disordered region spans residues 401 to 431 (HINNGVTEPEPDTASSSTPDSGTGSPELNGV). Over residues 412-426 (DTASSSTPDSGTGSP) the composition is skewed to low complexity.

Belongs to the PP2C family. In terms of assembly, interacts with KIN10. Mg(2+) serves as cofactor. It depends on Mn(2+) as a cofactor. As to expression, expressed in the whole plant.

The protein resides in the cell membrane. It carries out the reaction O-phospho-L-seryl-[protein] + H2O = L-seryl-[protein] + phosphate. The catalysed reaction is O-phospho-L-threonyl-[protein] + H2O = L-threonyl-[protein] + phosphate. In terms of biological role, acts as a protein phosphatase. The polypeptide is Probable protein phosphatase 2C 74 (Arabidopsis thaliana (Mouse-ear cress)).